The primary structure comprises 476 residues: Cysteine--tRNA ligase (476 aa).

Position 36 (Cys36) interacts with Zn(2+). Residues 38–48 (PTVYDYAHIGN) carry the 'HIGH' region motif. Residues Cys221, His246, and Glu250 each coordinate Zn(2+). A 'KMSKS' region motif is present at residues 278–282 (KMSKS). Position 281 (Lys281) interacts with ATP.

It belongs to the class-I aminoacyl-tRNA synthetase family. In terms of assembly, monomer. The cofactor is Zn(2+).

It localises to the cytoplasm. It carries out the reaction tRNA(Cys) + L-cysteine + ATP = L-cysteinyl-tRNA(Cys) + AMP + diphosphate. The protein is Cysteine--tRNA ligase of Chlamydia caviae (strain ATCC VR-813 / DSM 19441 / 03DC25 / GPIC) (Chlamydophila caviae).